A 137-amino-acid polypeptide reads, in one-letter code: ATP synthase epsilon chain (137 aa).

The protein belongs to the ATPase epsilon chain family. F-type ATPases have 2 components, CF(1) - the catalytic core - and CF(0) - the membrane proton channel. CF(1) has five subunits: alpha(3), beta(3), gamma(1), delta(1), epsilon(1). CF(0) has three main subunits: a, b and c.

It is found in the cellular thylakoid membrane. In terms of biological role, produces ATP from ADP in the presence of a proton gradient across the membrane. In Nostoc punctiforme (strain ATCC 29133 / PCC 73102), this protein is ATP synthase epsilon chain.